We begin with the raw amino-acid sequence, 318 residues long: Methionyl-tRNA formyltransferase (318 aa).

(6S)-5,6,7,8-tetrahydrofolate is bound at residue 110–113 (SLLP).

Belongs to the Fmt family.

The catalysed reaction is L-methionyl-tRNA(fMet) + (6R)-10-formyltetrahydrofolate = N-formyl-L-methionyl-tRNA(fMet) + (6S)-5,6,7,8-tetrahydrofolate + H(+). Functionally, attaches a formyl group to the free amino group of methionyl-tRNA(fMet). The formyl group appears to play a dual role in the initiator identity of N-formylmethionyl-tRNA by promoting its recognition by IF2 and preventing the misappropriation of this tRNA by the elongation apparatus. The sequence is that of Methionyl-tRNA formyltransferase from Geobacillus sp. (strain WCH70).